A 580-amino-acid chain; its full sequence is XK-related protein 7 (580 aa).

The segment covering 1–22 has biased composition (low complexity); it reads MAAKSDGAAAVAGPGPEGPAGA. Residues 1-28 are disordered; the sequence is MAAKSDGAAAVAGPGPEGPAGADRGGAG. The next 8 helical transmembrane spans lie at 59-79, 89-109, 260-280, 303-323, 326-346, 355-375, 384-404, and 415-435; these read WVLCALLVFFSDGATDLWLAA, YFGLTLLFVLLPSLVVQLLSF, LLTALSISASLVSLAWTLASY, VLWHLFTIAARTLAFALFASV, LYFGIFIVAHWCIMTFWVIQG, WEEIIYNMVVGIIYIFCWFNV, VTLYYCIVLLENAALTGFWYS, and LILVCVVASSFALGIFFMCVY. The disordered stretch occupies residues 470-516; it reads TSPPRSLPRTTGAERDGAAVGGERAGTPTPPVFQVRPGLPPTPVARP.

This sequence belongs to the XK family.

The protein resides in the cell membrane. The chain is XK-related protein 7 from Rattus norvegicus (Rat).